A 517-amino-acid polypeptide reads, in one-letter code: Putative lipase ATG15 (517 aa).

Residues 1 to 6 (MRASTH) lie on the Cytoplasmic side of the membrane. Residues 7 to 27 (SWLLLVVVLSLSSFTVNAVIL) traverse the membrane as a helical; Signal-anchor for type II membrane protein segment. The Lumenal segment spans residues 28–517 (EGLIPPRSHL…TNWHFTDETL (490 aa)). N-linked (GlcNAc...) asparagine glycans are attached at residues asparagine 187, asparagine 221, and asparagine 303. Serine 319 functions as the Charge relay system in the catalytic mechanism. Residues 466 to 499 (GWRWPWHRGDSADDDGDSDEDTDEDDKLAVPKAR) form a disordered region. Positions 477–491 (ADDDGDSDEDTDEDD) are enriched in acidic residues.

Belongs to the AB hydrolase superfamily. Lipase family. As to quaternary structure, binds to both phosphatidylinositol (PI) and phosphatidylinositol 3,5-bisphosphate (PIP2).

It is found in the endosome. It localises to the multivesicular body membrane. Its subcellular location is the prevacuolar compartment membrane. It catalyses the reaction a triacylglycerol + H2O = a diacylglycerol + a fatty acid + H(+). Its function is as follows. Lipase which is essential for lysis of subvacuolar cytoplasm to vacuole targeted bodies and intravacuolar autophagic bodies. Involved in the lysis of intravacuolar multivesicular body (MVB) vesicles. The intravacuolar membrane disintegration by ATG15 is critical to life span extension. The polypeptide is Putative lipase ATG15 (ATG15) (Mycosarcoma maydis (Corn smut fungus)).